A 242-amino-acid chain; its full sequence is MKKREIKKICLLYLQIIVFYSIMVSSMRRGKHHSKKKGELKIIKRANPFGKKKINRGSKSHSLLYLKNCELRNSGRRNTHLRDLFDHLSGGQPLRDSNIEEYHLTPKLRKTVQFFQALPNDPYRKSQEVILLGRKCPPMPEELKNRGCQSTVYVHPTVEDREGKKIIAWVGDSDGLLTKGIVYILVDGLSGYPPEQILRVNPNFITLTGISEFLTMSRINGYLNIMNKMKAFSTSIMQNGER.

The Cysteine persulfide intermediate role is filled by C148.

The protein belongs to the SufE family. In terms of assembly, monomer. Interacts with SufS; interaction enhances cysteine desulfurase activity of SufS.

It localises to the plastid. The protein resides in the apicoplast. Its pathway is cofactor biosynthesis; iron-sulfur cluster biosynthesis. Its function is as follows. Participates in sulfur mobilization (SUF) pathway for iron-sulfur (Fe-S) cluster biogenesis. Enhances cysteine desulfurase activity of SufS. Probably functions as a sulfur acceptor for SufS. The chain is Cysteine desulfuration protein SufE from Plasmodium vivax.